Reading from the N-terminus, the 434-residue chain is MITVFVACLFQCVSSLPAKLYIKTTLAEGIGKLQTVIGIDNDIVFAYERLYGDLTLRNHTAVGETLFDLAGSLEEGKNSTVDRFLGHVVIREFHRLHAGLQYVSVQNFSVSELVCFVNNNTQLSGSYVFLARNTTYVQIDLFNENRSFVHDLINVSSFLQNRSLHVLSFYARRFCVEDILNFYGKVVFGDSKYRPPQVFSKRDTGLLVCTARRYRPIGTNIQWSLHNQTVSDDHTTDDFIRTEISGQLLYSYERALSRALSMTHREFSCEITHKLLVTPALLTREDAFSFKGFVNPVKESEDTFPRHNFPAPHRKKFNKLQLLWIFIVIPIAAGCMFLYILTRYIQFFVSGGSSSNPNRVLKRRRGNDEVPMVIMEVEYCNYEAENHDMELHSVQNVRDDSIAVVCGNNSFDIERQSIKSHESFSNVKLEMLPL.

Residues 1–15 form the signal peptide; the sequence is MITVFVACLFQCVSS. Residues 322 to 342 traverse the membrane as a helical segment; it reads LLWIFIVIPIAAGCMFLYILT.

The protein localises to the host endoplasmic reticulum membrane. It is found in the host lysosome membrane. Its function is as follows. Plays a role in the down-regulation of the host stress-induced NKG2D ligand UBPL1, which enables immune cells expressing the NKG2D receptor to recognize and annihilate infected cells prior to viral spread. The sequence is that of Glycoprotein U20 (U20) from Human herpesvirus 6B (strain Z29) (HHV-6 variant B).